The following is a 40-amino-acid chain: Photosystem II reaction center protein J (40 aa).

The helical transmembrane segment at 8 to 28 (IPLWVVATIAGLGVITVVGIF) threads the bilayer.

Belongs to the PsbJ family. PSII is composed of 1 copy each of membrane proteins PsbA, PsbB, PsbC, PsbD, PsbE, PsbF, PsbH, PsbI, PsbJ, PsbK, PsbL, PsbM, PsbT, PsbX, PsbY, PsbZ, Psb30/Ycf12, peripheral proteins PsbO, CyanoQ (PsbQ), PsbU, PsbV and a large number of cofactors. It forms dimeric complexes.

It is found in the cellular thylakoid membrane. In terms of biological role, one of the components of the core complex of photosystem II (PSII). PSII is a light-driven water:plastoquinone oxidoreductase that uses light energy to abstract electrons from H(2)O, generating O(2) and a proton gradient subsequently used for ATP formation. It consists of a core antenna complex that captures photons, and an electron transfer chain that converts photonic excitation into a charge separation. In Trichormus variabilis (strain ATCC 29413 / PCC 7937) (Anabaena variabilis), this protein is Photosystem II reaction center protein J.